Reading from the N-terminus, the 259-residue chain is Thiazole synthase (259 aa).

Catalysis depends on Lys-99, which acts as the Schiff-base intermediate with DXP. 1-deoxy-D-xylulose 5-phosphate is bound by residues Gly-161, 187–188 (AG), and 209–210 (NT).

It belongs to the ThiG family. Homotetramer. Forms heterodimers with either ThiH or ThiS.

The protein resides in the cytoplasm. The catalysed reaction is [ThiS sulfur-carrier protein]-C-terminal-Gly-aminoethanethioate + 2-iminoacetate + 1-deoxy-D-xylulose 5-phosphate = [ThiS sulfur-carrier protein]-C-terminal Gly-Gly + 2-[(2R,5Z)-2-carboxy-4-methylthiazol-5(2H)-ylidene]ethyl phosphate + 2 H2O + H(+). It functions in the pathway cofactor biosynthesis; thiamine diphosphate biosynthesis. Catalyzes the rearrangement of 1-deoxy-D-xylulose 5-phosphate (DXP) to produce the thiazole phosphate moiety of thiamine. Sulfur is provided by the thiocarboxylate moiety of the carrier protein ThiS. In vitro, sulfur can be provided by H(2)S. In Nitratiruptor sp. (strain SB155-2), this protein is Thiazole synthase.